The chain runs to 279 residues: NADPH-dependent 7-cyano-7-deazaguanine reductase (279 aa).

Residue 86–88 (VES) participates in substrate binding. 88-89 (SK) contacts NADPH. The active-site Thioimide intermediate is Cys187. Asp194 (proton donor) is an active-site residue. Position 226 to 227 (226 to 227 (HE)) interacts with substrate. Residue 255 to 256 (RG) participates in NADPH binding.

The protein belongs to the GTP cyclohydrolase I family. QueF type 2 subfamily. Homodimer.

Its subcellular location is the cytoplasm. The enzyme catalyses 7-aminomethyl-7-carbaguanine + 2 NADP(+) = 7-cyano-7-deazaguanine + 2 NADPH + 3 H(+). It functions in the pathway tRNA modification; tRNA-queuosine biosynthesis. Functionally, catalyzes the NADPH-dependent reduction of 7-cyano-7-deazaguanine (preQ0) to 7-aminomethyl-7-deazaguanine (preQ1). The polypeptide is NADPH-dependent 7-cyano-7-deazaguanine reductase (Actinobacillus succinogenes (strain ATCC 55618 / DSM 22257 / CCUG 43843 / 130Z)).